Consider the following 227-residue polypeptide: Cytochrome c oxidase subunit 2 (227 aa).

Residues 1–14 (MAYPFQLGFQDATS) lie on the Mitochondrial intermembrane side of the membrane. A helical transmembrane segment spans residues 15-45 (PIMEELLHFHDHTLMIVFLISSLVLYVISAM). Residues 46–59 (LTTNLTHTSTMDAQ) lie on the Mitochondrial matrix side of the membrane. Residues 60-87 (EVETIWTILPAIILITIALPSLRILYMM) traverse the membrane as a helical segment. The Mitochondrial intermembrane segment spans residues 88 to 227 (DEINNPAMTI…YFEKWSVSML (140 aa)). Positions 161, 196, 198, 200, 204, and 207 each coordinate Cu cation. Residue Glu198 participates in Mg(2+) binding. Residue Tyr218 is modified to Phosphotyrosine.

It belongs to the cytochrome c oxidase subunit 2 family. In terms of assembly, component of the cytochrome c oxidase (complex IV, CIV), a multisubunit enzyme composed of 14 subunits. The complex is composed of a catalytic core of 3 subunits MT-CO1, MT-CO2 and MT-CO3, encoded in the mitochondrial DNA, and 11 supernumerary subunits COX4I, COX5A, COX5B, COX6A, COX6B, COX6C, COX7A, COX7B, COX7C, COX8 and NDUFA4, which are encoded in the nuclear genome. The complex exists as a monomer or a dimer and forms supercomplexes (SCs) in the inner mitochondrial membrane with NADH-ubiquinone oxidoreductase (complex I, CI) and ubiquinol-cytochrome c oxidoreductase (cytochrome b-c1 complex, complex III, CIII), resulting in different assemblies (supercomplex SCI(1)III(2)IV(1) and megacomplex MCI(2)III(2)IV(2)). Found in a complex with TMEM177, COA6, COX18, COX20, SCO1 and SCO2. Interacts with TMEM177 in a COX20-dependent manner. Interacts with COX20. Interacts with COX16. It depends on Cu cation as a cofactor.

It is found in the mitochondrion inner membrane. It catalyses the reaction 4 Fe(II)-[cytochrome c] + O2 + 8 H(+)(in) = 4 Fe(III)-[cytochrome c] + 2 H2O + 4 H(+)(out). Its function is as follows. Component of the cytochrome c oxidase, the last enzyme in the mitochondrial electron transport chain which drives oxidative phosphorylation. The respiratory chain contains 3 multisubunit complexes succinate dehydrogenase (complex II, CII), ubiquinol-cytochrome c oxidoreductase (cytochrome b-c1 complex, complex III, CIII) and cytochrome c oxidase (complex IV, CIV), that cooperate to transfer electrons derived from NADH and succinate to molecular oxygen, creating an electrochemical gradient over the inner membrane that drives transmembrane transport and the ATP synthase. Cytochrome c oxidase is the component of the respiratory chain that catalyzes the reduction of oxygen to water. Electrons originating from reduced cytochrome c in the intermembrane space (IMS) are transferred via the dinuclear copper A center (CU(A)) of subunit 2 and heme A of subunit 1 to the active site in subunit 1, a binuclear center (BNC) formed by heme A3 and copper B (CU(B)). The BNC reduces molecular oxygen to 2 water molecules using 4 electrons from cytochrome c in the IMS and 4 protons from the mitochondrial matrix. This is Cytochrome c oxidase subunit 2 (MT-CO2) from Macrotus californicus (Californian leaf-nosed bat).